The following is a 132-amino-acid chain: Sirohydrochlorin cobaltochelatase (132 aa).

His-10 acts as the Proton acceptor in catalysis. A Co(2+)-binding site is contributed by His-10. Substrate-binding positions include Arg-46 and 69–74; that span reads ISYGLH. His-74 is a Co(2+) binding site.

Belongs to the CbiX family. CbiXS subfamily. As to quaternary structure, homotetramer; dimer of dimers.

It carries out the reaction Co-sirohydrochlorin + 2 H(+) = sirohydrochlorin + Co(2+). The protein operates within cofactor biosynthesis; adenosylcobalamin biosynthesis; cob(II)yrinate a,c-diamide from sirohydrochlorin (anaerobic route): step 1/10. Its function is as follows. Catalyzes the insertion of Co(2+) into sirohydrochlorin as part of the anaerobic pathway to cobalamin biosynthesis. The chain is Sirohydrochlorin cobaltochelatase from Archaeoglobus fulgidus (strain ATCC 49558 / DSM 4304 / JCM 9628 / NBRC 100126 / VC-16).